The primary structure comprises 319 residues: Acetyl-coenzyme A carboxylase carboxyl transferase subunit alpha (319 aa).

Positions 35 to 296 (NIDEEVHRLR…KAQLLEDLAD (262 aa)) constitute a CoA carboxyltransferase C-terminal domain.

It belongs to the AccA family. As to quaternary structure, acetyl-CoA carboxylase is a heterohexamer composed of biotin carboxyl carrier protein (AccB), biotin carboxylase (AccC) and two subunits each of ACCase subunit alpha (AccA) and ACCase subunit beta (AccD).

The protein resides in the cytoplasm. It carries out the reaction N(6)-carboxybiotinyl-L-lysyl-[protein] + acetyl-CoA = N(6)-biotinyl-L-lysyl-[protein] + malonyl-CoA. It functions in the pathway lipid metabolism; malonyl-CoA biosynthesis; malonyl-CoA from acetyl-CoA: step 1/1. In terms of biological role, component of the acetyl coenzyme A carboxylase (ACC) complex. First, biotin carboxylase catalyzes the carboxylation of biotin on its carrier protein (BCCP) and then the CO(2) group is transferred by the carboxyltransferase to acetyl-CoA to form malonyl-CoA. The sequence is that of Acetyl-coenzyme A carboxylase carboxyl transferase subunit alpha from Salmonella paratyphi C (strain RKS4594).